A 358-amino-acid chain; its full sequence is MLENRVKTKQIFIGGVAIGGGAPISTQSMTFSKTADIQSTKNQIDRLKLAGADLVRVAVSNEKDALALKELKKVSPLPLIADIHFHYKFALIAAQSVDAIRINPGNIGSKDKIKAVVDACKEKNIPIRIGVNAGSLEKQFDQKYGPTVKGMVESALYNAKLLEDLDFTNFKISLKASDVIRTIEAYRMLRPLVIYPFHLGVTEAGNLFSSSIKSAMALGGLLMEGIGDTMRISITGELENEIKVARAILRYSGRLKEGINLISCPTCGRIEANLVDMAGKVEKRLSHIKTPLDISVMGCVVNALGEAKHADMAIAFGNRSGLIIKEGKVIHKLAEKDLFETFVTEVENLAKEREKTLN.

4 residues coordinate [4Fe-4S] cluster: C264, C267, C299, and E306.

Belongs to the IspG family. The cofactor is [4Fe-4S] cluster.

It catalyses the reaction (2E)-4-hydroxy-3-methylbut-2-enyl diphosphate + oxidized [flavodoxin] + H2O + 2 H(+) = 2-C-methyl-D-erythritol 2,4-cyclic diphosphate + reduced [flavodoxin]. It participates in isoprenoid biosynthesis; isopentenyl diphosphate biosynthesis via DXP pathway; isopentenyl diphosphate from 1-deoxy-D-xylulose 5-phosphate: step 5/6. Its function is as follows. Converts 2C-methyl-D-erythritol 2,4-cyclodiphosphate (ME-2,4cPP) into 1-hydroxy-2-methyl-2-(E)-butenyl 4-diphosphate. The polypeptide is 4-hydroxy-3-methylbut-2-en-1-yl diphosphate synthase (flavodoxin) (Helicobacter acinonychis (strain Sheeba)).